The sequence spans 238 residues: Endo-chitosanase (238 aa).

A signal peptide spans methionine 1–alanine 17. Asparagine 83 carries an N-linked (GlcNAc...) asparagine glycan.

Belongs to the glycosyl hydrolase 75 family.

The protein localises to the secreted. The catalysed reaction is Endohydrolysis of beta-(1-&gt;4)-linkages between D-glucosamine residues in a partly acetylated chitosan.. Functionally, chitosanase catalyzing the endo-type cleavage of chitosan, the deacylated form of chitin. Chitosanase may be crucial in the degradation of the deacetylated portion of chitin in the fungal cell wall. Chitoolisaccharides produced by the hydrolysis of partially N-acetylated chitosan are known to have many biological activities, including antibacterial activity, immune-enhancing effects, and elicitor activity. The chitosans with higher degrees of deacetylation were shown to be the better substrates. Chitodimer, chitotrimer, and chitotetramer are the major products but monoacetyl chitodimer, monoacetyl chitotrimer, and monoacetyl chitotetramer are also produced. The polypeptide is Endo-chitosanase (csn) (Aspergillus fumigatus (Neosartorya fumigata)).